A 365-amino-acid chain; its full sequence is Eukaryotic translation initiation factor 3 subunit H (365 aa).

The 150-residue stretch at 11–160 (VKVEALVVMK…LRAFRLSPKF (150 aa)) folds into the MPN domain.

The protein belongs to the eIF-3 subunit H family. In terms of assembly, component of the eukaryotic translation initiation factor 3 (eIF-3) complex.

The protein resides in the cytoplasm. Component of the eukaryotic translation initiation factor 3 (eIF-3) complex, which is involved in protein synthesis of a specialized repertoire of mRNAs and, together with other initiation factors, stimulates binding of mRNA and methionyl-tRNAi to the 40S ribosome. The eIF-3 complex specifically targets and initiates translation of a subset of mRNAs involved in cell proliferation. The protein is Eukaryotic translation initiation factor 3 subunit H of Aspergillus clavatus (strain ATCC 1007 / CBS 513.65 / DSM 816 / NCTC 3887 / NRRL 1 / QM 1276 / 107).